The following is an 83-amino-acid chain: Kunitz-type serine protease inhibitor homolog beta-bungarotoxin B chain (83 aa).

Positions 1 to 24 (MSSGSLLLLLGLLTLLAELTPVSS) are cleaved as a signal peptide. One can recognise a BPTI/Kunitz inhibitor domain in the interval 31–81 (CDKPPNKKRCTGHIPAFYYNPQRKTCERFSYGGCKGNGNHFKTPQLCMCHC). Intrachain disulfides connect C31-C81, C40-C64, and C56-C77.

Belongs to the venom Kunitz-type family. Heterodimer with beta-bungarotoxin A1 chain; disulfide-linked. The A chain has phospholipase A2 activity and the B chain shows homology with the basic protease inhibitors. In terms of tissue distribution, expressed by the venom gland.

The protein localises to the secreted. In terms of biological role, beta-bungarotoxin is a presynaptic neurotoxin of the venom. The B chain is homologous to venom basic protease inhibitors but has no protease inhibitor activity and is non-toxic. This is Kunitz-type serine protease inhibitor homolog beta-bungarotoxin B chain from Bungarus flaviceps flaviceps (Red-headed krait).